We begin with the raw amino-acid sequence, 638 residues long: Methylmalonyl-CoA mutase small subunit (638 aa).

Polar residues predominate over residues 1 to 11; that stretch reads MSSTDQGTNPA. Positions 1-34 are disordered; that stretch reads MSSTDQGTNPADTDDLTPTTLSLAGDFPKATEEQ.

It belongs to the methylmalonyl-CoA mutase family. Heterodimer of an alpha and a beta chain. Adenosylcob(III)alamin serves as cofactor.

The catalysed reaction is (R)-methylmalonyl-CoA = succinyl-CoA. It functions in the pathway metabolic intermediate metabolism; propanoyl-CoA degradation; succinyl-CoA from propanoyl-CoA: step 3/3. Catalyzes the isomerization of succinyl-CoA to methylmalonyl-CoA during synthesis of propionate from tricarboxylic acid-cycle intermediates. The chain is Methylmalonyl-CoA mutase small subunit (mutA) from Propionibacterium freudenreichii subsp. shermanii.